The chain runs to 461 residues: MSVLLETSLGDIVIDLLVDECPKACENFLKLCKVKYYNFSPVHSVQKNFTFQTGDPLGPDSSESDGGSSIWGLLEGPPKRTFSLEPPPKLKHDERGTVSMATVPSPHDPDQRIAASQFIVTLGENLDYLDGKAVIFGKVVEGFDVLEKVNEAFIDDRGRPLKDIRIRHTVILDDPFDDPPGLVAPAESPLPSKAQLATVRIADDEELDDNMDEESMEKLRREREARAQALTLEMVGDLPFAEVKPPENVLFVCKLNPVTQDEDLHLIFSRFGTILSCEVIRDKRTGDSLQYAFIEFENQKDCEQAYFKMQGVLIDDHRIHVDFSQSVSKLSESWRNATISKRSGQRGGFGGVASLEKKRQYRASDNAREKENDYTLVFDKGDKAPRRRSYSRSPQRSSNRDRRASRSPRRDSYRDPYRRRPGDRSHSRSPARGEYRDKDRGRYNHRERRRDDERYRERRRR.

Residues 1–171 (MSVLLETSLG…KDIRIRHTVI (171 aa)) enclose the PPIase cyclophilin-type domain. The stretch at 205–234 (EELDDNMDEESMEKLRREREARAQALTLEM) forms a coiled coil. Positions 248–326 (NVLFVCKLNP…HRIHVDFSQS (79 aa)) constitute an RRM domain. A disordered region spans residues 341–461 (KRSGQRGGFG…DERYRERRRR (121 aa)). Basic and acidic residues-rich tracts occupy residues 365-384 (DNAR…GDKA) and 398-461 (SNRD…RRRR).

It belongs to the cyclophilin-type PPIase family. PPIL4 subfamily.

Its subcellular location is the nucleus. The catalysed reaction is [protein]-peptidylproline (omega=180) = [protein]-peptidylproline (omega=0). Functionally, PPIases accelerate the folding of proteins. It catalyzes the cis-trans isomerization of proline imidic peptide bonds in oligopeptides. In Aspergillus oryzae (strain ATCC 42149 / RIB 40) (Yellow koji mold), this protein is Peptidyl-prolyl cis-trans isomerase-like 4 (cyp6).